Reading from the N-terminus, the 193-residue chain is dCTP deaminase (193 aa).

DCTP contacts are provided by residues 110 to 115, aspartate 128, 136 to 138, tyrosine 171, lysine 178, and glutamine 182; these read RSSLAR and VLE. Residue glutamate 138 is the Proton donor/acceptor of the active site. Positions 169 to 193 are disordered; it reads RPYNRRQDAKYRDQQGAVASRIDKD.

The protein belongs to the dCTP deaminase family. In terms of assembly, homotrimer.

The catalysed reaction is dCTP + H2O + H(+) = dUTP + NH4(+). It participates in pyrimidine metabolism; dUMP biosynthesis; dUMP from dCTP (dUTP route): step 1/2. In terms of biological role, catalyzes the deamination of dCTP to dUTP. The polypeptide is dCTP deaminase (Cronobacter sakazakii (strain ATCC BAA-894) (Enterobacter sakazakii)).